A 539-amino-acid chain; its full sequence is GMP synthase [glutamine-hydrolyzing] (539 aa).

The Glutamine amidotransferase type-1 domain maps to 4–202; it reads KILILDFGSQ…VLQIAGAKPD (199 aa). Residue Cys81 is the Nucleophile of the active site. Active-site residues include His176 and Glu178. In terms of domain architecture, GMPS ATP-PPase spans 203–395; sequence WIMKNHIEEA…LGLPPEMVYR (193 aa). An ATP-binding site is contributed by 230–236; that stretch reads SGGVDSS.

As to quaternary structure, homodimer.

The catalysed reaction is XMP + L-glutamine + ATP + H2O = GMP + L-glutamate + AMP + diphosphate + 2 H(+). It participates in purine metabolism; GMP biosynthesis; GMP from XMP (L-Gln route): step 1/1. Catalyzes the synthesis of GMP from XMP. This Burkholderia cenocepacia (strain ATCC BAA-245 / DSM 16553 / LMG 16656 / NCTC 13227 / J2315 / CF5610) (Burkholderia cepacia (strain J2315)) protein is GMP synthase [glutamine-hydrolyzing].